The chain runs to 390 residues: Pre-mycofactocin synthase (390 aa).

The region spanning 1–383 (MADEWFETVA…RSDDILIPAD (383 aa)) is the FMN hydroxy acid dehydrogenase domain. Ser108, Gln128, Thr156, and Lys254 together coordinate FMN. His278 (proton acceptor) is an active-site residue. FMN contacts are provided by residues 309–313 (DGGIR) and 332–333 (GR).

Belongs to the FMN-dependent alpha-hydroxy acid dehydrogenase family. The cofactor is FMN.

The catalysed reaction is 3-amino-5-[(4-hydroxyphenyl)methyl]-4,4-dimethyl-2-pyrrolidin-2-one + O2 + H2O = pre-mycofactocin + H2O2 + NH4(+). Its function is as follows. Involved in the biosynthesis of the enzyme cofactor mycofactocin (MFT). Catalyzes the oxidative deamination of AHDP (3-amino-5-[(4-hydroxyphenyl)methyl]-4,4-dimethyl-2-pyrrolidin-2-one), forming an alpha-keto amide moiety on the resulting molecule, which is called pre-mycofactocin (PMFT). This reaction occurs via a 5-[(4-hydroxyphenyl)methyl]-3-imino-4,4-dimethylpyrrolidin-2-one intermediate, which converts to PMFT. The alpha-keto amide moiety is the redox-active center for the redox activity of mycofactocin. The protein is Pre-mycofactocin synthase of Mycobacterium ulcerans (strain Agy99).